Reading from the N-terminus, the 452-residue chain is Probable intron-encoded endonuclease 2 (452 aa).

3 helical membrane passes run 1-21 (MNITLILFLIGILGFVLNRKN), 22-42 (IILMLISIEIMLLAITFLILV), and 57-77 (IYIIVVAGAESAIGLAILVAF). The interval 1–80 (MNITLILFLI…LAILVAFYRL (80 aa)) is ndh-4L exon 1 encoded. A ndh-4L intron 1 encoded region spans residues 81-452 (INSPVKNPRS…SLEGGMNKNI (372 aa)).

It in the N-terminal section; belongs to the complex I subunit 4L family. The protein in the C-terminal section; belongs to the LAGLIDADG endonuclease family.

It is found in the mitochondrion membrane. Its function is as follows. Mitochondrial DNA endonuclease involved in intron homing. In Neurospora crassa (strain ATCC 24698 / 74-OR23-1A / CBS 708.71 / DSM 1257 / FGSC 987), this protein is Probable intron-encoded endonuclease 2.